A 1056-amino-acid polypeptide reads, in one-letter code: Ribosomal protein S6 kinase delta-1 (1056 aa).

In terms of domain architecture, PX spans 8-132 (SADLARFYTV…DFFKGGVISD (125 aa)). The tract at residues 204 to 223 (VGAVASDSEPSRVEDRESRS) is disordered. Over residues 212–222 (EPSRVEDRESR) the composition is skewed to basic and acidic residues. The region spanning 276 to 304 (VQGESSPTRREAVKRRTAEYLMRAESICS) is the MIT domain. Ser-281, Ser-422, Ser-423, Ser-426, Ser-446, Ser-448, and Ser-454 each carry phosphoserine. Residues 343–444 (GVIDKVLLVM…SMPPRVCLQQ (102 aa)) enclose the Protein kinase 1 domain. Residues 426-504 (SLDIKEGRPS…KWLDSGSSSE (79 aa)) are disordered. Low complexity predominate over residues 443 to 454 (QQPSASPQGGSS). Over residues 473-482 (TSLTPSSQDD) the composition is skewed to polar residues. Residues Ser-493 and Ser-527 each carry the phosphoserine modification. A disordered region spans residues 529–588 (SEESVMQPEGDKADTQAVSSPASLATGSVSPSTHLRVFSGGEDLEAVSSPPTSESLSRSK). Residues 544–561 (QAVSSPASLATGSVSPST) show a composition bias toward polar residues. Over residues 576-587 (SSPPTSESLSRS) the composition is skewed to low complexity. A phosphoserine mark is found at Ser-577, Ser-599, Ser-602, Ser-634, Ser-655, Ser-658, Ser-661, and Ser-787. Residues 628–662 (TLEDGDSPSQSLDPGESKRESEAQDSVSRGSDDSV) form a disordered region. In terms of domain architecture, Protein kinase 2 spans 789 to 1046 (RSESDRLGQV…VEDIKSHPFF (258 aa)). ATP-binding positions include 795–803 (LGQVEVVVT) and Lys-823. Asp-919 serves as the catalytic Proton acceptor.

The protein belongs to the protein kinase superfamily. Ser/Thr protein kinase family. S6 kinase subfamily. As to quaternary structure, interacts with SPHK1 and phosphatidylinositol 3-phosphate. Interacts (via PX domain) with PRDX3.

Its subcellular location is the cytoplasm. It localises to the membrane. The protein localises to the early endosome. The catalysed reaction is L-seryl-[protein] + ATP = O-phospho-L-seryl-[protein] + ADP + H(+). It carries out the reaction L-threonyl-[protein] + ATP = O-phospho-L-threonyl-[protein] + ADP + H(+). Functionally, may be involved in transmitting sphingosine-1 phosphate (SPP)-mediated signaling into the cell. Plays a role in the recruitment of PRDX3 to early endosomes. This Mus musculus (Mouse) protein is Ribosomal protein S6 kinase delta-1 (Rps6kc1).